The chain runs to 1167 residues: ATP-dependent helicase/nuclease subunit A (1167 aa).

The 450-residue stretch at 2-451 (KNWTAEQMRA…IELSLNFRSR (450 aa)) folds into the UvrD-like helicase ATP-binding domain. ATP is bound at residue 23 to 30 (AAAGAGKT). The region spanning 478-768 (KAFLKKGADY…RVMSVHKSKG (291 aa)) is the UvrD-like helicase C-terminal domain.

Belongs to the helicase family. AddA subfamily. As to quaternary structure, heterodimer of AddA and AddB/RexB. Requires Mg(2+) as cofactor.

The enzyme catalyses Couples ATP hydrolysis with the unwinding of duplex DNA by translocating in the 3'-5' direction.. It catalyses the reaction ATP + H2O = ADP + phosphate + H(+). The heterodimer acts as both an ATP-dependent DNA helicase and an ATP-dependent, dual-direction single-stranded exonuclease. Recognizes the chi site generating a DNA molecule suitable for the initiation of homologous recombination. The AddA nuclease domain is required for chi fragment generation; this subunit has the helicase and 3' -&gt; 5' nuclease activities. This Carboxydothermus hydrogenoformans (strain ATCC BAA-161 / DSM 6008 / Z-2901) protein is ATP-dependent helicase/nuclease subunit A.